A 288-amino-acid polypeptide reads, in one-letter code: Bifunctional protein FolD (288 aa).

NADP(+) is bound by residues 166–168 and isoleucine 232; that span reads GAS.

This sequence belongs to the tetrahydrofolate dehydrogenase/cyclohydrolase family. Homodimer.

It carries out the reaction (6R)-5,10-methylene-5,6,7,8-tetrahydrofolate + NADP(+) = (6R)-5,10-methenyltetrahydrofolate + NADPH. It catalyses the reaction (6R)-5,10-methenyltetrahydrofolate + H2O = (6R)-10-formyltetrahydrofolate + H(+). It participates in one-carbon metabolism; tetrahydrofolate interconversion. In terms of biological role, catalyzes the oxidation of 5,10-methylenetetrahydrofolate to 5,10-methenyltetrahydrofolate and then the hydrolysis of 5,10-methenyltetrahydrofolate to 10-formyltetrahydrofolate. The chain is Bifunctional protein FolD from Shigella dysenteriae serotype 1 (strain Sd197).